We begin with the raw amino-acid sequence, 166 residues long: Lipoprotein signal peptidase (166 aa).

4 consecutive transmembrane segments (helical) span residues 9 to 29 (ASGA…FDQL), 45 to 65 (ALTS…FGFL), 71 to 91 (WQRW…CFLL), and 100 to 120 (FSLS…DRLV). Catalysis depends on residues Asp126 and Asp144. A helical membrane pass occupies residues 135 to 155 (WHFPAFNLADSAITVGAVLLV).

This sequence belongs to the peptidase A8 family.

Its subcellular location is the cell inner membrane. The catalysed reaction is Release of signal peptides from bacterial membrane prolipoproteins. Hydrolyzes -Xaa-Yaa-Zaa-|-(S,diacylglyceryl)Cys-, in which Xaa is hydrophobic (preferably Leu), and Yaa (Ala or Ser) and Zaa (Gly or Ala) have small, neutral side chains.. Its pathway is protein modification; lipoprotein biosynthesis (signal peptide cleavage). Functionally, this protein specifically catalyzes the removal of signal peptides from prolipoproteins. In Burkholderia ambifaria (strain MC40-6), this protein is Lipoprotein signal peptidase.